The chain runs to 136 residues: Large ribosomal subunit protein uL16 (136 aa).

Belongs to the universal ribosomal protein uL16 family. In terms of assembly, part of the 50S ribosomal subunit.

Functionally, binds 23S rRNA and is also seen to make contacts with the A and possibly P site tRNAs. This chain is Large ribosomal subunit protein uL16, found in Vibrio atlanticus (strain LGP32) (Vibrio splendidus (strain Mel32)).